The primary structure comprises 84 residues: Small ribosomal subunit protein bS18 (84 aa).

The protein belongs to the bacterial ribosomal protein bS18 family. In terms of assembly, part of the 30S ribosomal subunit. Forms a tight heterodimer with protein bS6.

Binds as a heterodimer with protein bS6 to the central domain of the 16S rRNA, where it helps stabilize the platform of the 30S subunit. In Polynucleobacter necessarius subsp. necessarius (strain STIR1), this protein is Small ribosomal subunit protein bS18.